The primary structure comprises 269 residues: Protein MrkE (269 aa).

The Response regulatory domain occupies 59–173; that stretch reads KVIIVEDEFL…RIINMLQKLT (115 aa). Asp-110 is subject to 4-aspartylphosphate. Residues 197 to 269 enclose the HTH LytTR-type domain; it reads INLIKDERII…VAQVSIANRF (73 aa).

In terms of biological role, may be involved in the regulation of fimbrial expression. The polypeptide is Protein MrkE (mrkE) (Klebsiella pneumoniae).